The primary structure comprises 497 residues: MDAMKYNDLRDFLTLLEQQGELKRITLPVDPHLEITEIADRTLRAGGPALLFENPKGYSMPVLCNLFGTPKRVAMGMGQEDVSTLREVGKLLAFLKEPEPPKGFRDLFDKLPQFKQVLNMPTKRLRGAPCQQKIVSGDDVDLNRIPIMTCWPEDAAPLITWGLTVTRGPHKERQNLGIYRQQLIGKNKLIMRWLSHRGGALDYQEWCAAHPGERFPVSVALGADPATILGAVTPVPDTLSEYAFAGLLRGTKTEVVKCISNDLEVPASAEIVLEGYIDPGEMAPEGPYGDHTGYYNEVDNFPVFTVTHITQREDAIYHSTYTGRPPDEPAVLGVALNEVFVPILQKQFPEIVDFYLPPEGCSYRLAVVTIKKQYAGHAKRVMMGVWSFLRQFMYTKFVIVCDDDVNARDWNDVIWAITTRMDPARDTVLVENTPIDYLDFASPVSGLGSKMGLDATNKWPGETQREWGRPIKKDPDVVAHIDAIWDELAIFNNGKSA.

Asn175 provides a ligand contact to Mn(2+). Prenylated FMN is bound by residues Ile178–Arg180, Arg192–Leu194, and Arg197–Gly198. Glu241 is a Mn(2+) binding site. Residue Asp290 is the Proton donor of the active site.

It belongs to the UbiD family. In terms of assembly, homohexamer. Prenylated FMN serves as cofactor. Requires Mn(2+) as cofactor.

The protein resides in the cell membrane. It carries out the reaction a 4-hydroxy-3-(all-trans-polyprenyl)benzoate + H(+) = a 2-(all-trans-polyprenyl)phenol + CO2. Its pathway is cofactor biosynthesis; ubiquinone biosynthesis. Its function is as follows. Catalyzes the decarboxylation of 3-octaprenyl-4-hydroxy benzoate to 2-octaprenylphenol, an intermediate step in ubiquinone biosynthesis. The protein is 3-octaprenyl-4-hydroxybenzoate carboxy-lyase of Shigella flexneri.